The chain runs to 514 residues: Beta-glucosidase 16 (514 aa).

The N-terminal stretch at M1–A21 is a signal peptide. Q49 is a binding site for a beta-D-glucoside. N80 carries an N-linked (GlcNAc...) asparagine glycan. Residues H153 and N198 to E199 contribute to the a beta-D-glucoside site. Residue E199 is the Proton donor of the active site. A disulfide bridge links C218 with C226. Y343 is a binding site for a beta-D-glucoside. The N-linked (GlcNAc...) asparagine glycan is linked to N357. A beta-D-glucoside is bound by residues E413, W458, E465 to W466, and F474. E413 functions as the Nucleophile in the catalytic mechanism.

Belongs to the glycosyl hydrolase 1 family. Expressed at low levels in cauline leaves and flowers.

It catalyses the reaction Hydrolysis of terminal, non-reducing beta-D-glucosyl residues with release of beta-D-glucose.. The sequence is that of Beta-glucosidase 16 from Arabidopsis thaliana (Mouse-ear cress).